A 1770-amino-acid chain; its full sequence is Transposon Ty2-F Gag-Pol polyprotein (1770 aa).

Polar residues-rich tracts occupy residues 1–11 (MESQQLHQNPH), 19–39 (ASVTSKEVPSNQDPLAVSASN), and 49–60 (KVNSQQETTPGT). Disordered stretches follow at residues 1-86 (MESQ…GQYQ) and 359-453 (QHSE…LPDH). The interval 295–397 (ENNINVSDRL…SSKPRAAKAH (103 aa)) is RNA-binding. Over residues 369–381 (TSPNTTNTKVTTR) the composition is skewed to low complexity. Composition is skewed to polar residues over residues 399–408 (IATSSKFSRV) and 415–435 (ESTVSSQYLSDDNELSLGQQQ). Aspartate 457 functions as the For protease activity; shared with dimeric partner in the catalytic mechanism. The segment at 579–636 (NVNKSKSVNKYPYPLIHRMLGHANFRSIQKSLKKNAVTYLKESDIEWSNASTYQCPDC) is integrase-type zinc finger-like. The region spanning 656–831 (ESYEPFQYLH…AGLDITTILP (176 aa)) is the Integrase catalytic domain. Residues aspartate 667 and aspartate 732 each contribute to the Mg(2+) site. Disordered stretches follow at residues 1004–1034 (MGGTVESDTTSPRHSSTFTARNQNRPGSTNE), 1059–1135 (TEEP…KSSK), 1146–1165 (LPLPDLTHKSPTDTSDVSKD), and 1170–1205 (HSRQTNSSLGGMDDSNVLTTTKSKKRSLEDNETEIE). Polar residues-rich tracts occupy residues 1009-1034 (ESDTTSPRHSSTFTARNQNRPGSTNE) and 1065-1082 (QRNSDTNIKYRTTNSTPS). Over residues 1151–1165 (LTHKSPTDTSDVSKD) the composition is skewed to basic and acidic residues. Residues 1193–1227 (KKRSLEDNETEIEVSRDTWNNKNMRSLEPPRSKKR) carry the Bipartite nuclear localization signal motif. A Reverse transcriptase Ty1/copia-type domain is found at 1353-1491 (NDYYITQLDI…DILGLEIKYQ (139 aa)). Residues aspartate 1361, aspartate 1442, aspartate 1443, aspartate 1625, glutamate 1667, and aspartate 1700 each contribute to the Mg(2+) site. Positions 1625-1767 (DASYGNQPYY…IKTFKLLTNK (143 aa)) constitute an RNase H Ty1/copia-type domain.

As to quaternary structure, the capsid protein forms a homotrimer, from which the VLPs are assembled. The protease is a homodimer, whose active site consists of two apposed aspartic acid residues. In terms of processing, initially, virus-like particles (VLPs) are composed of the structural unprocessed proteins Gag and Gag-Pol, and also contain the host initiator methionine tRNA (tRNA(i)-Met) which serves as a primer for minus-strand DNA synthesis, and a dimer of genomic Ty RNA. Processing of the polyproteins occurs within the particle and proceeds by an ordered pathway, called maturation. First, the protease (PR) is released by autocatalytic cleavage of the Gag-Pol polyprotein, and this cleavage is a prerequisite for subsequent processing at the remaining sites to release the mature structural and catalytic proteins. Maturation takes place prior to the RT reaction and is required to produce transposition-competent VLPs.

Its subcellular location is the cytoplasm. The protein resides in the nucleus. It carries out the reaction DNA(n) + a 2'-deoxyribonucleoside 5'-triphosphate = DNA(n+1) + diphosphate. The catalysed reaction is Endonucleolytic cleavage to 5'-phosphomonoester.. Its function is as follows. Capsid protein (CA) is the structural component of the virus-like particle (VLP), forming the shell that encapsulates the retrotransposons dimeric RNA genome. The particles are assembled from trimer-clustered units and there are holes in the capsid shells that allow for the diffusion of macromolecules. CA also has nucleocapsid-like chaperone activity, promoting primer tRNA(i)-Met annealing to the multipartite primer-binding site (PBS), dimerization of Ty2 RNA and initiation of reverse transcription. In terms of biological role, the aspartyl protease (PR) mediates the proteolytic cleavages of the Gag and Gag-Pol polyproteins after assembly of the VLP. Reverse transcriptase/ribonuclease H (RT) is a multifunctional enzyme that catalyzes the conversion of the retro-elements RNA genome into dsDNA within the VLP. The enzyme displays a DNA polymerase activity that can copy either DNA or RNA templates, and a ribonuclease H (RNase H) activity that cleaves the RNA strand of RNA-DNA heteroduplexes during plus-strand synthesis and hydrolyzes RNA primers. The conversion leads to a linear dsDNA copy of the retrotransposon that includes long terminal repeats (LTRs) at both ends. Functionally, integrase (IN) targets the VLP to the nucleus, where a subparticle preintegration complex (PIC) containing at least integrase and the newly synthesized dsDNA copy of the retrotransposon must transit the nuclear membrane. Once in the nucleus, integrase performs the integration of the dsDNA into the host genome. The protein is Transposon Ty2-F Gag-Pol polyprotein (TY2B-F) of Saccharomyces cerevisiae (strain ATCC 204508 / S288c) (Baker's yeast).